The sequence spans 347 residues: Histidinol-phosphate aminotransferase (347 aa).

Lysine 209 is modified (N6-(pyridoxal phosphate)lysine).

It belongs to the class-II pyridoxal-phosphate-dependent aminotransferase family. Histidinol-phosphate aminotransferase subfamily. Homodimer. Requires pyridoxal 5'-phosphate as cofactor.

It carries out the reaction L-histidinol phosphate + 2-oxoglutarate = 3-(imidazol-4-yl)-2-oxopropyl phosphate + L-glutamate. It functions in the pathway amino-acid biosynthesis; L-histidine biosynthesis; L-histidine from 5-phospho-alpha-D-ribose 1-diphosphate: step 7/9. This chain is Histidinol-phosphate aminotransferase, found in Geotalea uraniireducens (strain Rf4) (Geobacter uraniireducens).